Consider the following 744-residue polypeptide: Cell division cycle protein 27 homolog B (744 aa).

The stretch at 101–134 is one TPR 1 repeat; that stretch reads AAGHYLLGLIYKYTDRRKNAAQQFKQSLTIDPLL. Residues 180–199 are compositionally biased toward polar residues; the sequence is NEERNSTSTKNTSSEDYSPR. Disordered regions lie at residues 180–218 and 359–390; these read NEER…NFHS and ENMD…NDQE. Over residues 363-374 the composition is skewed to basic and acidic residues; it reads EGVRGEPFDDSR. Positions 375–387 are enriched in polar residues; the sequence is PNTASTTGSMASN. 7 TPR repeats span residues 450-483, 518-551, 553-585, 587-619, 621-653, 655-687, and 688-721; these read GWVL…SPYC, PQSW…NPRF, YAHT…DTRH, NAWY…NPSS, VIMS…DRKN, LPMY…APSE, and SSVY…KPPA.

The protein belongs to the APC3/CDC27 family. The APC/C is composed of at least 10 subunits. Can homodimerize. Interacts with APC2, APC10, FZR2 and FZR3. Interacts with PANS1. Interacts with SAMBA. Specifically expressed in dividing and elongating cells.

It is found in the nucleus. Its pathway is protein modification; protein ubiquitination. Functionally, component of the anaphase promoting complex/cyclosome (APC/C), a cell cycle-regulated E3 ubiquitin-protein ligase complex that controls progression through mitosis and the G1 phase of the cell cycle. The APC/C complex controls several key steps in the cell cycle by mediating ubiquitination and subsequent degradation of target proteins such as cyclins. The APC/C complex is required for the female gametophyte development and is involved in several aspect of development by controlling cell division and cell elongation. Involved in the control of endoreduplication. Functionally redundant with CDC27A in the control of gametophyte development. The protein is Cell division cycle protein 27 homolog B (CDC27B) of Arabidopsis thaliana (Mouse-ear cress).